Reading from the N-terminus, the 143-residue chain is Transcriptional regulator MraZ (143 aa).

2 SpoVT-AbrB domains span residues 5 to 47 (EYRH…TQEE) and 76 to 119 (ATEC…SEDR).

It belongs to the MraZ family. In terms of assembly, forms oligomers.

Its subcellular location is the cytoplasm. The protein resides in the nucleoid. This Ligilactobacillus salivarius (strain UCC118) (Lactobacillus salivarius) protein is Transcriptional regulator MraZ.